Consider the following 112-residue polypeptide: Frizzy aggregation protein FrzB (112 aa).

Functionally, necessary for proper aggregation of cells to form fruiting bodies. FRZ genes define a system of signal transduction analogous to the enterobacterial chemotaxis systems. The protein is Frizzy aggregation protein FrzB (frzB) of Myxococcus xanthus.